The following is a 580-amino-acid chain: Negative elongation factor B (580 aa).

N6-acetyllysine is present on lysine 519. The segment at 548 to 580 (LEQLDHRKPSPAQAAETPALELPLPSVPAPAPL) is disordered. The residue at position 557 (serine 557) is a Phosphoserine.

Belongs to the NELF-B family. In terms of assembly, the NELF complex is composed of NELFA, NELFB, NELFCD (isoform NELF-C or isoform NELF-D) and NELFE; the N-terminus of NELFB binds to the NELFA:NELFCD subcomplex. Binds RNA which may help to stabilize the NELF complex on nucleic acid. Interacts with the first BRCT repeat of BRCA1. Interacts with KIAA1191. Interacts with NELFE. As to expression, widely expressed. Expressed in heart, brain, lung, placenta, liver, skeletal muscle, kidney and pancreas.

The protein localises to the nucleus. In terms of biological role, essential component of the NELF complex, a complex that negatively regulates the elongation of transcription by RNA polymerase II. The NELF complex, which acts via an association with the DSIF complex and causes transcriptional pausing, is counteracted by the P-TEFb kinase complex. May be able to induce chromatin unfolding. Essential for early embryogenesis; plays an important role in maintaining the undifferentiated state of embryonic stem cells (ESCs) by preventing unscheduled expression of developmental genes. Plays a key role in establishing the responsiveness of stem cells to developmental cues; facilitates plasticity and cell fate commitment in ESCs by establishing the appropriate expression level of signaling molecules. Supports the transcription of genes involved in energy metabolism in cardiomyocytes; facilitates the association of transcription initiation factors with the promoters of the metabolism-related genes. Functionally, (Microbial infection) The NELF complex is involved in HIV-1 latency possibly involving recruitment of PCF11 to paused RNA polymerase II. In vitro, binds weakly to the HIV-1 TAR RNA which is located in the long terminal repeat (LTR) of HIV-1. This is Negative elongation factor B (NELFB) from Homo sapiens (Human).